The sequence spans 449 residues: Signal recognition particle protein (449 aa).

GTP is bound by residues 109–116 (GLQGGGKT), 191–195 (DTAGR), and 249–252 (SRID).

This sequence belongs to the GTP-binding SRP family. SRP54 subfamily. In terms of assembly, part of the signal recognition particle protein translocation system, which is composed of SRP and FtsY. SRP is a ribonucleoprotein composed of Ffh and a 4.5S RNA molecule.

The protein localises to the cytoplasm. It carries out the reaction GTP + H2O = GDP + phosphate + H(+). Its function is as follows. Involved in targeting and insertion of nascent membrane proteins into the cytoplasmic membrane. Binds to the hydrophobic signal sequence of the ribosome-nascent chain (RNC) as it emerges from the ribosomes. The SRP-RNC complex is then targeted to the cytoplasmic membrane where it interacts with the SRP receptor FtsY. Interaction with FtsY leads to the transfer of the RNC complex to the Sec translocase for insertion into the membrane, the hydrolysis of GTP by both Ffh and FtsY, and the dissociation of the SRP-FtsY complex into the individual components. The protein is Signal recognition particle protein of Rickettsia typhi (strain ATCC VR-144 / Wilmington).